Here is a 157-residue protein sequence, read N- to C-terminus: MAKVESFTLDHTAVKAPYVRLITRETGTKGDVISNFDLRLVQPNENAIPTAGLHTIEHLLAGYLRDEMSGVIDCSPFGCRTGFHLITWDEQSTEEVAKALKASLHRIAYDTEWKDVQGTDKYSCGNYRDHSLFSAKEWCKAILDEGISKDPFTREVI.

Residues His-54, His-58, and Cys-124 each contribute to the Fe cation site.

The protein belongs to the LuxS family. In terms of assembly, homodimer. Fe cation is required as a cofactor.

The enzyme catalyses S-(5-deoxy-D-ribos-5-yl)-L-homocysteine = (S)-4,5-dihydroxypentane-2,3-dione + L-homocysteine. In terms of biological role, involved in the synthesis of autoinducer 2 (AI-2) which is secreted by bacteria and is used to communicate both the cell density and the metabolic potential of the environment. The regulation of gene expression in response to changes in cell density is called quorum sensing. Catalyzes the transformation of S-ribosylhomocysteine (RHC) to homocysteine (HC) and 4,5-dihydroxy-2,3-pentadione (DPD). The protein is S-ribosylhomocysteine lyase of Levilactobacillus brevis (strain ATCC 367 / BCRC 12310 / CIP 105137 / JCM 1170 / LMG 11437 / NCIMB 947 / NCTC 947) (Lactobacillus brevis).